The following is a 324-amino-acid chain: Protein SRC2 homolog (324 aa).

Residues methionine 1–lysine 111 form the C2 domain. Topologically, residues methionine 1–lysine 279 are cytoplasmic. A disordered region spans residues glycine 141 to glycine 281. Composition is skewed to low complexity over residues tyrosine 166 to alanine 175 and proline 246 to glycine 269. Residues lysine 270–lysine 279 are compositionally biased toward basic residues. The chain crosses the membrane as a helical; Signal-anchor span at residues alanine 280 to valine 300. Topologically, residues glycine 301–phenylalanine 324 are lumenal.

As to quaternary structure, interacts with RBOHF (via N-terminus).

The protein localises to the endoplasmic reticulum membrane. It localises to the protein storage vacuole membrane. It is found in the cell membrane. May act as an activator of the calcium-dependent activation of RBOHF that mediates reactive oxygen species (ROS) production and may play a role in cold responses. The chain is Protein SRC2 homolog from Arabidopsis thaliana (Mouse-ear cress).